Reading from the N-terminus, the 139-residue chain is Metallothiol transferase FosB (139 aa).

The region spanning 4-119 (GINHITYSVS…DGHKLELHTG (116 aa)) is the VOC domain. The Mg(2+) site is built by histidine 7, histidine 66, and glutamate 115. Glutamate 115 serves as the catalytic Proton donor/acceptor.

This sequence belongs to the fosfomycin resistance protein family. FosB subfamily. As to quaternary structure, homodimer. Requires Mg(2+) as cofactor.

The protein localises to the cytoplasm. Its function is as follows. Metallothiol transferase which confers resistance to fosfomycin by catalyzing the addition of a thiol cofactor to fosfomycin. L-cysteine is probably the physiological thiol donor. The sequence is that of Metallothiol transferase FosB from Staphylococcus epidermidis.